Here is a 396-residue protein sequence, read N- to C-terminus: Flap endonuclease 1 (396 aa).

The tract at residues 1 to 105 is N-domain; the sequence is MGIHGLTKLL…DQLAQRTERR (105 aa). Asp-34 lines the Mg(2+) pocket. DNA is bound at residue Arg-71. 5 residues coordinate Mg(2+): Asp-87, Glu-159, Glu-161, Asp-180, and Asp-182. Residues 123–254 are I-domain; it reads AIEKYSKRSV…VRALQMIKKH (132 aa). Residue Glu-159 coordinates DNA. DNA-binding residues include Gly-232 and Asp-234. Mg(2+) is bound at residue Asp-234. The segment at 338 to 346 is interaction with PCNA; it reads NQGRLESFF. Residues 341 to 396 form a disordered region; that stretch reads RLESFFTSLPKPATADKAKPKEDDKKRKAGAAAGGKDAKGGAAAKKGKFGVGGGKK. The span at 354 to 366 shows a compositional bias: basic and acidic residues; that stretch reads TADKAKPKEDDKK. The segment covering 370-384 has biased composition (low complexity); that stretch reads GAAAGGKDAKGGAAA.

It belongs to the XPG/RAD2 endonuclease family. FEN1 subfamily. In terms of assembly, interacts with PCNA. Three molecules of FEN1 bind to one PCNA trimer with each molecule binding to one PCNA monomer. PCNA stimulates the nuclease activity without altering cleavage specificity. The cofactor is Mg(2+). Post-translationally, phosphorylated. Phosphorylation upon DNA damage induces relocalization to the nuclear plasma.

Its subcellular location is the nucleus. The protein localises to the nucleolus. The protein resides in the nucleoplasm. It localises to the mitochondrion. Functionally, structure-specific nuclease with 5'-flap endonuclease and 5'-3' exonuclease activities involved in DNA replication and repair. During DNA replication, cleaves the 5'-overhanging flap structure that is generated by displacement synthesis when DNA polymerase encounters the 5'-end of a downstream Okazaki fragment. It enters the flap from the 5'-end and then tracks to cleave the flap base, leaving a nick for ligation. Also involved in the long patch base excision repair (LP-BER) pathway, by cleaving within the apurinic/apyrimidinic (AP) site-terminated flap. Acts as a genome stabilization factor that prevents flaps from equilibrating into structures that lead to duplications and deletions. Also possesses 5'-3' exonuclease activity on nicked or gapped double-stranded DNA, and exhibits RNase H activity. Also involved in replication and repair of rDNA and in repairing mitochondrial DNA. This chain is Flap endonuclease 1, found in Chlamydomonas reinhardtii (Chlamydomonas smithii).